The sequence spans 127 residues: Fumarate reductase subunit C (127 aa).

3 helical membrane-spanning segments follow: residues 30–50 (ATVLPLILFTIFLTFGLGSLV), 67–87 (IVVAINIVALLGSLFHAQTFF), and 107–127 (IIVLTQWAAVAFISLIVLIVM).

This sequence belongs to the FrdC family. Part of an enzyme complex containing four subunits: a flavoprotein (FrdA), an iron-sulfur protein (FrdB), and two hydrophobic anchor proteins (FrdC and FrdD).

Its subcellular location is the cell inner membrane. Anchors the catalytic components of the fumarate reductase complex to the cell membrane, binds quinones. This Vibrio campbellii (strain ATCC BAA-1116) protein is Fumarate reductase subunit C.